A 647-amino-acid polypeptide reads, in one-letter code: Frizzled-1 (647 aa).

The signal sequence occupies residues M1 to G69. Topologically, residues Q73 to W322 are extracellular. Positions A74–G104 are disordered. In terms of domain architecture, FZ spans P111–Q230. 5 disulfides stabilise this stretch: C116–C177, C124–C170, C161–C198, C187–C227, and C191–C215. An N-linked (GlcNAc...) asparagine glycan is attached at N130. N-linked (GlcNAc...) asparagine glycosylation occurs at N231. A helical transmembrane segment spans residues I323–V343. The Cytoplasmic portion of the chain corresponds to D344 to P354. The chain crosses the membrane as a helical span at residues I355–L375. Topologically, residues E376 to C402 are extracellular. Residues T403–L423 traverse the membrane as a helical segment. Residues S424–Q445 are Cytoplasmic-facing. Residues Y446 to G466 traverse the membrane as a helical segment. The Extracellular segment spans residues Q467–G489. A helical transmembrane segment spans residues F490–F510. Topologically, residues V511–R536 are cytoplasmic. A helical transmembrane segment spans residues I537–Y557. Residues E558–T601 are Extracellular-facing. The chain crosses the membrane as a helical span at residues V602–W622. Residues S623–V647 lie on the Cytoplasmic side of the membrane. Residues K625–W630 carry the Lys-Thr-X-X-X-Trp motif, mediates interaction with the PDZ domain of Dvl family members motif. The short motif at T645–V647 is the PDZ-binding element.

The protein belongs to the G-protein coupled receptor Fz/Smo family. Interacts with MYOC. Interacts with WNT7B. In terms of assembly, (Microbial infection) Interacts with C.difficile toxin TcdB; frizzled receptors constitute the major host receptors for TcdB in the colonic epithelium. Post-translationally, ubiquitinated by ZNRF3, leading to its degradation by the proteasome. Expressed in adult heart, placenta, lung, kidney, pancreas, prostate, and ovary and in fetal lung and kidney.

Its subcellular location is the cell membrane. Receptor for Wnt proteins. Activated by WNT3A, WNT3, WNT1 and to a lesser extent WNT2, but apparently not by WNT4, WNT5A, WNT5B, WNT6, WNT7A or WNT7B. Contradictory results showing activation by WNT7B have been described for mouse. Functions in the canonical Wnt/beta-catenin signaling pathway. The canonical Wnt/beta-catenin signaling pathway leads to the activation of disheveled proteins, inhibition of GSK-3 kinase, nuclear accumulation of beta-catenin and activation of Wnt target genes. A second signaling pathway involving PKC and calcium fluxes has been seen for some family members, but it is not yet clear if it represents a distinct pathway or if it can be integrated in the canonical pathway, as PKC seems to be required for Wnt-mediated inactivation of GSK-3 kinase. Both pathways seem to involve interactions with G-proteins. May be involved in transduction and intercellular transmission of polarity information during tissue morphogenesis and/or in differentiated tissues. In terms of biological role, (Microbial infection) Acts as a receptor for C.difficile toxin TcdB in the colonic epithelium. The protein is Frizzled-1 (FZD1) of Homo sapiens (Human).